A 443-amino-acid chain; its full sequence is Probable lipase C16A3.12c (443 aa).

The Cytoplasmic segment spans residues 1–16 (MSGFNKNQIYWGDYVG). Residues 17 to 37 (VIAAFVGVYTELVARIFIYMI) form a helical; Signal-anchor for type II membrane protein membrane-spanning segment. Topologically, residues 38–443 (PERVREWFRV…KHFVKQNGFH (406 aa)) are lumenal. Residues 116–410 (VVYCHHGLMT…HYEHLDFLWG (295 aa)) form the AB hydrolase-1 domain. 2 N-linked (GlcNAc...) asparagine glycosylation sites follow: Asn134 and Asn177. The active-site Nucleophile is the Ser210. N-linked (GlcNAc...) asparagine glycans are attached at residues Asn304 and Asn335. Catalysis depends on charge relay system residues Asp378 and His404.

This sequence belongs to the AB hydrolase superfamily. Lipase family.

The protein resides in the cytoplasm. It is found in the vacuole. Its subcellular location is the membrane. Probable lipase. The sequence is that of Probable lipase C16A3.12c from Schizosaccharomyces pombe (strain 972 / ATCC 24843) (Fission yeast).